The primary structure comprises 543 residues: Pectate disaccharide-lyase (543 aa).

This sequence belongs to the polysaccharide lyase 2 family. The cofactor is Cu cation. Mn(2+) is required as a cofactor. It depends on Ni(2+) as a cofactor.

The protein resides in the cytoplasm. The enzyme catalyses [(1-&gt;4)-alpha-D-galacturonosyl](n) = 4-(4-deoxy-alpha-D-galact-4-enuronosyl)-D-galacturonate + [(1-&gt;4)-alpha-D-galacturonosyl](n-2). The protein operates within glycan metabolism; pectin degradation. Functionally, catalyzes the formation of unsaturated digalacturonates from polygalacturonate or short oligogalacturonates. In Dickeya dadantii (strain 3937) (Erwinia chrysanthemi (strain 3937)), this protein is Pectate disaccharide-lyase (pelW).